The following is a 177-amino-acid chain: Parathyroid hormone-related protein (177 aa).

An N-terminal signal peptide occupies residues 1-24; that stretch reads MLRRLVQQWSVLVFLLSYSVPSRG. Positions 25–34 are excised as a propeptide; it reads RSVEGLGRRL. Residues 57–68 form an important for receptor binding region; sequence RFFLHHLIAEIH. The tract at residues 74-177 is disordered; the sequence is ATSEVSPNSK…TSLEPSSRTH (104 aa). Residues 76 to 90 are compositionally biased toward polar residues; it reads SEVSPNSKPAPNTKN. The Nuclear localization signal motif lies at 108 to 129; that stretch reads TNKVETYKEQPLKTPGKKKKGK. Residues 109–118 are compositionally biased toward basic and acidic residues; that stretch reads NKVETYKEQP. Over residues 122 to 132 the composition is skewed to basic residues; the sequence is PGKKKKGKPGK. A compositionally biased stretch (low complexity) spans 161–177; it reads PHTSPTSTSLEPSSRTH.

This sequence belongs to the parathyroid hormone family. As to quaternary structure, PTHrP interacts with PTH1R (via N-terminal extracellular domain). Post-translationally, there are several secretory forms, including osteostatin, arising from endoproteolytic cleavage of the initial translation product. Each of these secretory forms is believed to have one or more of its own receptors that mediates the normal paracrine, autocrine and endocrine actions.

It is found in the secreted. Its subcellular location is the cytoplasm. The protein resides in the nucleus. Its function is as follows. Neuroendocrine peptide which is a critical regulator of cellular and organ growth, development, migration, differentiation and survival and of epithelial calcium ion transport. Acts by binding to its receptor, PTH1R, activating G protein-coupled receptor signaling. Regulates endochondral bone development and epithelial-mesenchymal interactions during the formation of the mammary glands and teeth. Required for skeletal homeostasis. Promotes mammary mesenchyme differentiation and bud outgrowth by modulating mesenchymal cell responsiveness to BMPs. Up-regulates BMPR1A expression in the mammary mesenchyme and this increases the sensitivity of these cells to BMPs and allows them to respond to BMP4 in a paracrine and/or autocrine fashion. BMP4 signaling in the mesenchyme, in turn, triggers epithelial outgrowth and augments MSX2 expression, which causes the mammary mesenchyme to inhibit hair follicle formation within the nipple sheath. In terms of biological role, potent inhibitor of osteoclastic bone resorption. This chain is Parathyroid hormone-related protein (Pthlh), found in Rattus norvegicus (Rat).